The chain runs to 427 residues: Enolase (427 aa).

Glutamine 163 is a binding site for (2R)-2-phosphoglycerate. Catalysis depends on glutamate 205, which acts as the Proton donor. Mg(2+) is bound by residues aspartate 242, glutamate 285, and aspartate 312. (2R)-2-phosphoglycerate contacts are provided by lysine 337, arginine 366, serine 367, and lysine 388. Lysine 337 serves as the catalytic Proton acceptor.

The protein belongs to the enolase family. The cofactor is Mg(2+).

The protein resides in the cytoplasm. It is found in the secreted. It localises to the cell surface. It catalyses the reaction (2R)-2-phosphoglycerate = phosphoenolpyruvate + H2O. It participates in carbohydrate degradation; glycolysis; pyruvate from D-glyceraldehyde 3-phosphate: step 4/5. Functionally, catalyzes the reversible conversion of 2-phosphoglycerate (2-PG) into phosphoenolpyruvate (PEP). It is essential for the degradation of carbohydrates via glycolysis. The chain is Enolase from Bradyrhizobium sp. (strain ORS 278).